Reading from the N-terminus, the 376-residue chain is Chaperone protein DnaJ (376 aa).

The 66-residue stretch at 5–70 (DYYEILGVSK…QKRAAYDQYG (66 aa)) folds into the J domain. A CR-type zinc finger spans residues 131-209 (GVTKEIRIPT…CHGHGRVERS (79 aa)). 8 residues coordinate Zn(2+): Cys144, Cys147, Cys161, Cys164, Cys183, Cys186, Cys197, and Cys200. CXXCXGXG motif repeat units follow at residues 144–151 (CDVCHGSG), 161–168 (CPTCHGSG), 183–190 (CPHCQGRG), and 197–204 (CNKCHGHG).

It belongs to the DnaJ family. Homodimer. The cofactor is Zn(2+).

It is found in the cytoplasm. In terms of biological role, participates actively in the response to hyperosmotic and heat shock by preventing the aggregation of stress-denatured proteins and by disaggregating proteins, also in an autonomous, DnaK-independent fashion. Unfolded proteins bind initially to DnaJ; upon interaction with the DnaJ-bound protein, DnaK hydrolyzes its bound ATP, resulting in the formation of a stable complex. GrpE releases ADP from DnaK; ATP binding to DnaK triggers the release of the substrate protein, thus completing the reaction cycle. Several rounds of ATP-dependent interactions between DnaJ, DnaK and GrpE are required for fully efficient folding. Also involved, together with DnaK and GrpE, in the DNA replication of plasmids through activation of initiation proteins. The chain is Chaperone protein DnaJ from Escherichia coli O157:H7 (strain EC4115 / EHEC).